Here is a 585-residue protein sequence, read N- to C-terminus: SLAIN motif-containing protein-like (585 aa).

Disordered regions lie at residues 1-34 (MVVPDSGSDIQPADNGDTDKVMSNSEPELDPNLT), 55-125 (NQTL…RVEE), 324-365 (QDYA…EDEC), 402-476 (PRLS…SDGQ), and 492-585 (GSMS…DGCY). A compositionally biased stretch (polar residues) spans 68–83 (GGTNNSNLKAGSNINN). Over residues 327 to 345 (ASTSASRRSSSASLQSLRR) the composition is skewed to low complexity. Residues 351–365 (QEFDSYSQEDEEDEC) are compositionally biased toward acidic residues. Polar residues-rich tracts occupy residues 425–434 (PNLTPRTSLR), 441–476 (NSRSMEANLQSSGNRTSCLPHSPKGASSSRMRSDGQ), and 549–563 (ASPSSRTRLPQTPRS). Positions 575–585 (LTDESWKDGCY) are enriched in basic and acidic residues.

Belongs to the SLAIN motif-containing family.

The protein is SLAIN motif-containing protein-like of Danio rerio (Zebrafish).